The primary structure comprises 258 residues: Retron Ec83 putative HNH endonuclease (258 aa).

Putative HNH endonuclease component of antiviral defense system retron Ec83, composed of a non-coding RNA (ncRNA), a reverse transcriptase (RT), a probable ATPase and this protein. Expression of retron Ec78 confers protection against bacteriophage T2, T4 and T6. At multiplicity of infection (MOI) of 0.02 cultures slow growth when infected with T4 but do not collapse, at MOI 2 cultures enter growth stasis. The polypeptide is Retron Ec83 putative HNH endonuclease (Escherichia coli).